The primary structure comprises 85 residues: U1-theraphotoxin-Hs1a (85 aa).

Residues 1–22 form the signal peptide; it reads MKVTLIAILTCAAVLVLHTTAA. A propeptide spanning residues 23 to 48 is cleaved from the precursor; it reads EELEAESQLMEVGMPDTELAAVDEER. Intrachain disulfides connect Cys52/Cys66, Cys56/Cys77, and Cys71/Cys82.

Heterodimer composed of the two variants Ile-58 and Gln-58. As to expression, expressed by the venom gland.

Its subcellular location is the secreted. Functionally, lethal neurotoxin that blocks neuromuscular transmission. Acts cooperatively to potentiate the activity of huwentoxin-I. This toxin is active against insects. The protein is U1-theraphotoxin-Hs1a of Cyriopagopus schmidti (Chinese bird spider).